The chain runs to 76 residues: Translational regulator CsrA (76 aa).

It belongs to the CsrA/RsmA family. Homodimer; the beta-strands of each monomer intercalate to form a hydrophobic core, while the alpha-helices form wings that extend away from the core.

It is found in the cytoplasm. Functionally, a translational regulator that binds mRNA to regulate translation initiation and/or mRNA stability. Usually binds in the 5'-UTR at or near the Shine-Dalgarno sequence preventing ribosome-binding, thus repressing translation. Its main target seems to be the major flagellin gene, while its function is anatagonized by FliW. The chain is Translational regulator CsrA from Wolinella succinogenes (strain ATCC 29543 / DSM 1740 / CCUG 13145 / JCM 31913 / LMG 7466 / NCTC 11488 / FDC 602W) (Vibrio succinogenes).